A 364-amino-acid chain; its full sequence is Anhydro-N-acetylmuramic acid kinase (364 aa).

An ATP-binding site is contributed by 11 to 18 (GSSLDGID).

The protein belongs to the anhydro-N-acetylmuramic acid kinase family.

The catalysed reaction is 1,6-anhydro-N-acetyl-beta-muramate + ATP + H2O = N-acetyl-D-muramate 6-phosphate + ADP + H(+). Its pathway is amino-sugar metabolism; 1,6-anhydro-N-acetylmuramate degradation. It participates in cell wall biogenesis; peptidoglycan recycling. Catalyzes the specific phosphorylation of 1,6-anhydro-N-acetylmuramic acid (anhMurNAc) with the simultaneous cleavage of the 1,6-anhydro ring, generating MurNAc-6-P. Is required for the utilization of anhMurNAc either imported from the medium or derived from its own cell wall murein, and thus plays a role in cell wall recycling. The chain is Anhydro-N-acetylmuramic acid kinase from Pseudomonas savastanoi pv. phaseolicola (strain 1448A / Race 6) (Pseudomonas syringae pv. phaseolicola (strain 1448A / Race 6)).